A 72-amino-acid chain; its full sequence is UPF0270 protein YheU (72 aa).

This sequence belongs to the UPF0270 family.

The sequence is that of UPF0270 protein YheU from Salmonella dublin (strain CT_02021853).